Consider the following 497-residue polypeptide: Glycerol kinase (497 aa).

T13 serves as a coordination point for ADP. 3 residues coordinate ATP: T13, T14, and S15. T13 serves as a coordination point for sn-glycerol 3-phosphate. An ADP-binding site is contributed by R17. Positions 83, 84, and 135 each coordinate sn-glycerol 3-phosphate. The glycerol site is built by R83, E84, and Y135. At H231 the chain carries Phosphohistidine; by HPr. Residue D245 coordinates sn-glycerol 3-phosphate. Residues D245 and Q246 each contribute to the glycerol site. Positions 267 and 310 each coordinate ADP. ATP contacts are provided by T267, G310, Q314, and G411. ADP is bound by residues G411 and N415.

This sequence belongs to the FGGY kinase family. Homotetramer and homodimer (in equilibrium). The phosphoenolpyruvate-dependent sugar phosphotransferase system (PTS), including enzyme I, and histidine-containing protein (HPr) are required for the phosphorylation, which leads to the activation of the enzyme.

The catalysed reaction is glycerol + ATP = sn-glycerol 3-phosphate + ADP + H(+). The protein operates within polyol metabolism; glycerol degradation via glycerol kinase pathway; sn-glycerol 3-phosphate from glycerol: step 1/1. Activated by phosphorylation and inhibited by fructose 1,6-bisphosphate (FBP). Key enzyme in the regulation of glycerol uptake and metabolism. Catalyzes the phosphorylation of glycerol to yield sn-glycerol 3-phosphate. The polypeptide is Glycerol kinase (Listeria innocua serovar 6a (strain ATCC BAA-680 / CLIP 11262)).